Consider the following 149-residue polypeptide: Large-conductance mechanosensitive channel (149 aa).

Helical transmembrane passes span 8–28 (FIMR…SAFT) and 74–94 (IGSV…LFLI).

This sequence belongs to the MscL family. In terms of assembly, homopentamer.

It is found in the cell membrane. Channel that opens in response to stretch forces in the membrane lipid bilayer. May participate in the regulation of osmotic pressure changes within the cell. The chain is Large-conductance mechanosensitive channel from Enterococcus faecalis (strain ATCC 700802 / V583).